We begin with the raw amino-acid sequence, 281 residues long: Undecaprenyl-diphosphatase (281 aa).

A run of 7 helical transmembrane segments spans residues 45–65 (AFTN…VVVI), 86–106 (WQLW…GLIF), 114–134 (FQNF…FIYV), 148–168 (LVSL…LSLI), 196–216 (FFLG…KFIV), 224–244 (SQLF…LYVI), and 256–276 (FTFF…YGLM).

The protein belongs to the UppP family.

Its subcellular location is the cell membrane. It carries out the reaction di-trans,octa-cis-undecaprenyl diphosphate + H2O = di-trans,octa-cis-undecaprenyl phosphate + phosphate + H(+). Functionally, catalyzes the dephosphorylation of undecaprenyl diphosphate (UPP). Confers resistance to bacitracin. The chain is Undecaprenyl-diphosphatase from Streptococcus mutans serotype c (strain ATCC 700610 / UA159).